The primary structure comprises 165 residues: Small ribosomal subunit protein uS5 (165 aa).

Positions 10-73 (LKEKVVFINR…EDAKKHLVEV (64 aa)) constitute an S5 DRBM domain.

Belongs to the universal ribosomal protein uS5 family. Part of the 30S ribosomal subunit. Contacts proteins S4 and S8.

Functionally, with S4 and S12 plays an important role in translational accuracy. Located at the back of the 30S subunit body where it stabilizes the conformation of the head with respect to the body. This chain is Small ribosomal subunit protein uS5, found in Clostridium novyi (strain NT).